The sequence spans 95 residues: Protein TusB (95 aa).

It belongs to the DsrH/TusB family. As to quaternary structure, heterohexamer, formed by a dimer of trimers. The hexameric TusBCD complex contains 2 copies each of TusB, TusC and TusD. The TusBCD complex interacts with TusE.

Its subcellular location is the cytoplasm. Part of a sulfur-relay system required for 2-thiolation of 5-methylaminomethyl-2-thiouridine (mnm(5)s(2)U) at tRNA wobble positions. This chain is Protein TusB, found in Escherichia coli O157:H7.